An 86-amino-acid chain; its full sequence is Large ribosomal subunit protein bL27 (86 aa).

Positions 1–11 are enriched in gly residues; sequence MATKKAGGGSR. Positions 1–24 are disordered; that stretch reads MATKKAGGGSRNGRDSAGRRLGVK.

The protein belongs to the bacterial ribosomal protein bL27 family.

This Rickettsia africae (strain ESF-5) protein is Large ribosomal subunit protein bL27.